The chain runs to 324 residues: Zinc transporter ZIP1 (324 aa).

Residues 1 to 30 (MGPWGEPELLVWRPEAVASEPSVPVGLEVK) are Extracellular-facing. A helical membrane pass occupies residues 31-51 (LGALVLLLLLTLICSLVPVCV). Residues 52–68 (LRRSGANHEASASGQKA) are Cytoplasmic-facing. The helical transmembrane segment at 69–89 (LSLVSCFAGGVFLATCLLDLL) threads the bilayer. Over 90–104 (PDYLAAIDEALEALH) the chain is Extracellular. A helical transmembrane segment spans residues 105–125 (VTLQFPLQEFILAMGFFLVLV). The Cytoplasmic segment spans residues 126-179 (MEQITLAYKEQTSPPHPEETRALLGTVNGGPQHWHDGPGIPQAGGTPAAPSALR). A helical transmembrane segment spans residues 180-200 (ACVLVFSLALHSVFEGLAVGL). Residues 201–206 (QRDRAR) are Extracellular-facing. A helical transmembrane segment spans residues 207-227 (AMELCLALLLHKGILAVSLSL). Over 228-237 (RLLQSHLRVQ) the chain is Cytoplasmic. The chain crosses the membrane as a helical span at residues 238–258 (VVAGCGILFSCMTPLGIGLGA). The Extracellular portion of the chain corresponds to 259–272 (ALAESAGPLHQLAQ). The helical transmembrane segment at 273–293 (SVLEGMAAGTFLYITFLEILP) threads the bilayer. At 294–303 (QELATSEQRI) the chain is on the cytoplasmic side. A helical membrane pass occupies residues 304-324 (LKVILLLAGFALLTGLLFVQI).

This sequence belongs to the ZIP transporter (TC 2.A.5) family. In terms of tissue distribution, ubiquitous, except in the pancreas. Highest levels seen in kidney, salivary gland and placenta.

The protein resides in the cell membrane. Its subcellular location is the endoplasmic reticulum membrane. It catalyses the reaction Zn(2+)(in) = Zn(2+)(out). Functionally, transporter for the divalent cation Zn(2+). Mediates the influx of Zn(2+) into cells from extracellular space. In Mus musculus (Mouse), this protein is Zinc transporter ZIP1 (Slc39a1).